Here is a 272-residue protein sequence, read N- to C-terminus: MDHRTPTPDNPWLALRNLTPARIALGRTGTSLPTGAQLDFQFAHAQARDAVHLAFDHAGLASQLSDRGRESLVLHSAASDRHQYLQRPDLGRRLNEDSIATLRQHAQANPGGVDLAIVVADGLSALAVHRHTLPFLTRFDEQAAADGWTCAPVVLVQQGRVAVADEVGELLGARMTVMLIGERPGLSSPDSLGLYFTYAPKVGLTDAYRNCISNIRLEGLSYGMAAHRLLYLMREACRRQLSGVNLKDEAEVHSLENEDSANQKGNFLLGKG.

Residues Val161, Glu182, and Cys211 each coordinate adenosylcob(III)alamin.

This sequence belongs to the EutC family. As to quaternary structure, the basic unit is a heterodimer which dimerizes to form tetramers. The heterotetramers trimerize; 6 large subunits form a core ring with 6 small subunits projecting outwards. Adenosylcob(III)alamin is required as a cofactor.

It localises to the bacterial microcompartment. It carries out the reaction ethanolamine = acetaldehyde + NH4(+). It functions in the pathway amine and polyamine degradation; ethanolamine degradation. Functionally, catalyzes the deamination of various vicinal amino-alcohols to oxo compounds. Allows this organism to utilize ethanolamine as the sole source of nitrogen and carbon in the presence of external vitamin B12. This Pseudomonas putida (strain ATCC 47054 / DSM 6125 / CFBP 8728 / NCIMB 11950 / KT2440) protein is Ethanolamine ammonia-lyase small subunit.